The sequence spans 222 residues: Coiled-coil domain-containing protein 70 (222 aa).

The stretch at 129–153 (NALWERDRNLLQEDKALWEEEKALW) forms a coiled coil.

This chain is Coiled-coil domain-containing protein 70, found in Homo sapiens (Human).